A 124-amino-acid chain; its full sequence is MPTFNQLVRNGRKPPRWKTSSPALESCPQKRGVCTRVYTSTPKKPNSALRKVARVRLTNGIEVTTYIPGVGHNLQEHSIVLIRGGRVKDLPGVRYHVIRGALDTAGVANRKQSRSKYGAKRPKS.

The interval 1–25 (MPTFNQLVRNGRKPPRWKTSSPALE) is disordered. A 3-methylthioaspartic acid modification is found at Asp89. Residues 104–124 (TAGVANRKQSRSKYGAKRPKS) form a disordered region. A compositionally biased stretch (basic residues) spans 111 to 124 (KQSRSKYGAKRPKS).

Belongs to the universal ribosomal protein uS12 family. Part of the 30S ribosomal subunit. Contacts proteins S8 and S17. May interact with IF1 in the 30S initiation complex.

With S4 and S5 plays an important role in translational accuracy. Its function is as follows. Interacts with and stabilizes bases of the 16S rRNA that are involved in tRNA selection in the A site and with the mRNA backbone. Located at the interface of the 30S and 50S subunits, it traverses the body of the 30S subunit contacting proteins on the other side and probably holding the rRNA structure together. The combined cluster of proteins S8, S12 and S17 appears to hold together the shoulder and platform of the 30S subunit. The chain is Small ribosomal subunit protein uS12 from Solibacter usitatus (strain Ellin6076).